A 109-amino-acid chain; its full sequence is Nucleoid-associated protein AHA_2212 (109 aa).

Disordered stretches follow at residues 1-23 (MFGK…RMQK) and 88-109 (NKSK…KMPF). Over residues 11–23 (MKQAQQMQERMQK) the composition is skewed to low complexity.

This sequence belongs to the YbaB/EbfC family. As to quaternary structure, homodimer.

The protein resides in the cytoplasm. It is found in the nucleoid. Functionally, binds to DNA and alters its conformation. May be involved in regulation of gene expression, nucleoid organization and DNA protection. This chain is Nucleoid-associated protein AHA_2212, found in Aeromonas hydrophila subsp. hydrophila (strain ATCC 7966 / DSM 30187 / BCRC 13018 / CCUG 14551 / JCM 1027 / KCTC 2358 / NCIMB 9240 / NCTC 8049).